The following is a 388-amino-acid chain: Pepsin A-2/A-3 (388 aa).

The N-terminal stretch at 1-15 (MKWLLLLGLVALSEC) is a signal peptide. 2 propeptides (activation peptide) span residues 16-40 (IIHKVPLVRKKSLRRNLSEHGLLKD) and 41-62 (FLKKHNFNPASKYFPQAEAPTL). The 310-residue stretch at 76–385 (YFGTIGIGTP…DRANNQVGLA (310 aa)) folds into the Peptidase A1 domain. Asp-94 is an active-site residue. An intrachain disulfide couples Cys-107 to Cys-112. Ser-130 bears the Phosphoserine mark. A disulfide bridge connects residues Cys-268 and Cys-272. The active site involves Asp-277. A disulfide bond links Cys-311 and Cys-344.

It belongs to the peptidase A1 family. In terms of processing, pepsin A-2 is phosphorylated, but not pepsin A-3. Post-translationally, each pepsinogen is converted to corresponding pepsin at pH 2.0 in part as a result of the release of a 47 AA activation segment and in part as a result of stepwise proteolytic cleavage via an intermediate form(s).

It is found in the secreted. It carries out the reaction Preferential cleavage: hydrophobic, preferably aromatic, residues in P1 and P1' positions. Cleaves 1-Phe-|-Val-2, 4-Gln-|-His-5, 13-Glu-|-Ala-14, 14-Ala-|-Leu-15, 15-Leu-|-Tyr-16, 16-Tyr-|-Leu-17, 23-Gly-|-Phe-24, 24-Phe-|-Phe-25 and 25-Phe-|-Tyr-26 bonds in the B chain of insulin.. In terms of biological role, shows particularly broad specificity; although bonds involving phenylalanine and leucine are preferred, many others are also cleaved to some extent. This is Pepsin A-2/A-3 from Macaca fuscata fuscata (Japanese macaque).